The primary structure comprises 476 residues: Oogenesin-2 (476 aa).

Residues 97–121 form an LRR 1; degenerate repeat; sequence RCKLREITLSHDLVVVWAGSHEVEG. The LRR 2; degenerate repeat unit spans residues 176-200; that stretch reads HLHCRKLKIYGLTKAAVIEMFKIVH. One copy of the LRR 3; degenerate repeat lies at 201-226; sequence AEYIEDLELSCLCLEYLDFLNPYLKQ. An LRR 4; degenerate repeat occupies 227–264; that stretch reads MSNLLSLTLDEIIYTLNIDDYRNLNEEKVITVISHLPT. LRR repeat units lie at residues 265 to 285, 286 to 317, 342 to 369, and 370 to 394; these read FHHL…LRCL, KKPL…FELR, RHTL…ALSQ, and CYQL…LLHH.

Belongs to the PRAME family. Expressed in ovary, specifically in oocytes. Detected in follicles with two layers of granulosa cells, and are present in early as well as large antral follicles.

The chain is Oogenesin-2 from Mus musculus (Mouse).